Consider the following 240-residue polypeptide: UDP-2,3-diacylglucosamine hydrolase (240 aa).

Mn(2+) contacts are provided by D8, H10, D41, N79, and H114. Position 79 to 80 (79 to 80) interacts with substrate; the sequence is NR. 5 residues coordinate substrate: D122, S160, N164, K167, and H195. The Mn(2+) site is built by H195 and H197.

It belongs to the LpxH family. It depends on Mn(2+) as a cofactor.

The protein localises to the cell inner membrane. The catalysed reaction is UDP-2-N,3-O-bis[(3R)-3-hydroxytetradecanoyl]-alpha-D-glucosamine + H2O = 2-N,3-O-bis[(3R)-3-hydroxytetradecanoyl]-alpha-D-glucosaminyl 1-phosphate + UMP + 2 H(+). It functions in the pathway glycolipid biosynthesis; lipid IV(A) biosynthesis; lipid IV(A) from (3R)-3-hydroxytetradecanoyl-[acyl-carrier-protein] and UDP-N-acetyl-alpha-D-glucosamine: step 4/6. In terms of biological role, hydrolyzes the pyrophosphate bond of UDP-2,3-diacylglucosamine to yield 2,3-diacylglucosamine 1-phosphate (lipid X) and UMP by catalyzing the attack of water at the alpha-P atom. Involved in the biosynthesis of lipid A, a phosphorylated glycolipid that anchors the lipopolysaccharide to the outer membrane of the cell. This Yersinia enterocolitica serotype O:8 / biotype 1B (strain NCTC 13174 / 8081) protein is UDP-2,3-diacylglucosamine hydrolase.